Consider the following 107-residue polypeptide: MMAARIKKGDQVVVITGSSKGSRGEVLSVRPDDNKAVVRGVAVAKRHTRPNRMGEQGGIIEKEMPIHLSNLKLVDPKSGKPTRVGFRILEDGRKVRVAKATGEVVEG.

This sequence belongs to the universal ribosomal protein uL24 family. Part of the 50S ribosomal subunit.

Its function is as follows. One of two assembly initiator proteins, it binds directly to the 5'-end of the 23S rRNA, where it nucleates assembly of the 50S subunit. Functionally, one of the proteins that surrounds the polypeptide exit tunnel on the outside of the subunit. The chain is Large ribosomal subunit protein uL24 from Gluconacetobacter diazotrophicus (strain ATCC 49037 / DSM 5601 / CCUG 37298 / CIP 103539 / LMG 7603 / PAl5).